Consider the following 155-residue polypeptide: Transcriptional repressor NrdR (155 aa).

Residues 3–34 fold into a zinc finger; the sequence is CPFCGHSSTQVLDSRVSEDGDTVRRRRRCEAC. The 91-residue stretch at 49–139 folds into the ATP-cone domain; it reads PAIVKKNGSR…VYRSFEDVSE (91 aa).

This sequence belongs to the NrdR family. Zn(2+) serves as cofactor.

Functionally, negatively regulates transcription of bacterial ribonucleotide reductase nrd genes and operons by binding to NrdR-boxes. The chain is Transcriptional repressor NrdR from Cupriavidus metallidurans (strain ATCC 43123 / DSM 2839 / NBRC 102507 / CH34) (Ralstonia metallidurans).